Consider the following 244-residue polypeptide: Putative outer membrane protein RC0105 (244 aa).

The first 23 residues, 1 to 23, serve as a signal peptide directing secretion; that stretch reads MLRIVKKLGIILFVSTISINSFA.

This sequence belongs to the OmpW/AlkL family.

The protein localises to the cell outer membrane. The sequence is that of Putative outer membrane protein RC0105 from Rickettsia conorii (strain ATCC VR-613 / Malish 7).